The chain runs to 271 residues: Solute carrier family 66 member 2 (271 aa).

3 consecutive transmembrane segments (helical) span residues 7 to 27 (GWLL…AMVF), 49 to 69 (FSTH…LFWF), and 72 to 92 (HFES…LLML). A PQ-loop 1 domain is found at 14–80 (HQLVSWVAAG…RHFESPLLWQ (67 aa)). Ser110 carries the phosphoserine modification. Helical transmembrane passes span 143 to 163 (FADY…ITYL), 168 to 188 (ALFV…LGVP), and 232 to 252 (VCGL…YAFA). The region spanning 149–215 (CVLAFTGVAG…MVLMWTSGDT (67 aa)) is the PQ-loop 2 domain.

The protein resides in the membrane. In Rattus norvegicus (Rat), this protein is Solute carrier family 66 member 2 (Slc66a2).